A 212-amino-acid chain; its full sequence is Ribosomal RNA small subunit methyltransferase G (212 aa).

S-adenosyl-L-methionine is bound by residues G80, L85, 131–132 (AE), and R146.

Belongs to the methyltransferase superfamily. RNA methyltransferase RsmG family.

It localises to the cytoplasm. It catalyses the reaction guanosine(527) in 16S rRNA + S-adenosyl-L-methionine = N(7)-methylguanosine(527) in 16S rRNA + S-adenosyl-L-homocysteine. In terms of biological role, specifically methylates the N7 position of guanine in position 527 of 16S rRNA. In Xanthomonas oryzae pv. oryzae (strain KACC10331 / KXO85), this protein is Ribosomal RNA small subunit methyltransferase G.